The primary structure comprises 36 residues: Photosystem I reaction center subunit VIII (36 aa).

A helical transmembrane segment spans residues 8–28; the sequence is AILVPIVGLVFPALSMALFFI.

It belongs to the PsaI family.

The protein localises to the plastid. It localises to the chloroplast thylakoid membrane. Functionally, may help in the organization of the PsaL subunit. The chain is Photosystem I reaction center subunit VIII from Phaeodactylum tricornutum (strain CCAP 1055/1).